The following is a 70-amino-acid chain: MTMNVLEAGKWKSIVPAPGEGLLAVLHMMVFTDALHRERSVKWQAGVCYNGGKDFAVSLARPKAAEGIAD.

As to expression, expressed in many tissues, with highest expression in prostate and testis. Reduced expression in esophageal carcinomas.

Candidate tumor suppressor. The protein is Deleted in esophageal cancer 1 of Homo sapiens (Human).